The sequence spans 96 residues: Co-chaperonin GroES (96 aa).

Belongs to the GroES chaperonin family. As to quaternary structure, heptamer of 7 subunits arranged in a ring. Interacts with the chaperonin GroEL.

The protein resides in the cytoplasm. Together with the chaperonin GroEL, plays an essential role in assisting protein folding. The GroEL-GroES system forms a nano-cage that allows encapsulation of the non-native substrate proteins and provides a physical environment optimized to promote and accelerate protein folding. GroES binds to the apical surface of the GroEL ring, thereby capping the opening of the GroEL channel. This is Co-chaperonin GroES from Buchnera aphidicola subsp. Myzus persicae (Myzus persicae primary endosymbiont).